The sequence spans 49 residues: Small, acid-soluble spore protein O (49 aa).

The interval 1 to 49 (MGKRKANHTISGMNAASAQGQGTGYNEEFANEPFTPAERQNNKKRKKNQ) is disordered. Positions 8-20 (HTISGMNAASAQG) are enriched in polar residues.

This sequence belongs to the SspO family.

The protein localises to the spore core. The protein is Small, acid-soluble spore protein O of Bacillus cereus (strain ATCC 14579 / DSM 31 / CCUG 7414 / JCM 2152 / NBRC 15305 / NCIMB 9373 / NCTC 2599 / NRRL B-3711).